A 172-amino-acid polypeptide reads, in one-letter code: CYLSERLMLDARENLKLLDRMNRLSPHSCLQDRKDFGLPQEMVEGDQLQKDQAFPVLYEMLQQSFNLFYTEHSSAAWDTTLLEQLCTGLQQQLDHLDTCRGQVMGEEDSELGNMDPIVTVKKYFEGIYDLLQEKGYSDCAWEIVRVEMMRALTVSTTLQKRLTKMGGDLNSP.

Intrachain disulfides connect cysteine 1–cysteine 99 and cysteine 29–cysteine 139.

It belongs to the alpha/beta interferon family. IFN-alphaII subfamily. In terms of tissue distribution, constitutively and exclusively expressed in the mononuclear cells of the extraembryonic trophectoderm.

It localises to the secreted. Functionally, paracrine hormone primarily responsible for maternal recognition of pregnancy. Interacts with endometrial receptors, probably type I interferon receptors, and blocks estrogen receptor expression, preventing the estrogen-induced increase in oxytocin receptor expression in the endometrium. This results in the suppression of the pulsatile endometrial release of the luteolytic hormone prostaglandin F2-alpha, hindering the regression of the corpus luteum (luteolysis) and therefore a return to ovarian cyclicity. This, and a possible direct effect of IFN-tau on prostaglandin synthesis, leads in turn to continued ovarian progesterone secretion, which stimulates the secretion by the endometrium of the nutrients required for the growth of the conceptus. In summary, displays particularly high antiviral and antiproliferative potency concurrently with particular weak cytotoxicity, high antiluteolytic activity and immunomodulatory properties. In contrast with other IFNs, IFN-tau is not virally inducible. This chain is Interferon tau-3 (IFNT3), found in Ovis aries (Sheep).